Here is a 126-residue protein sequence, read N- to C-terminus: MTRIVGVDLPKNKRIEISLTYIYGIGKSKAIEILEQLKINRNIKTKELKDEQIVLIRQILNNSYQIEGDLKRVESMNIKRLMTISSYRGKRHQLGLPLRGQNTRTNARTKRGIKKTMAGKKKAPRK.

The tract at residues 95 to 126 is disordered; it reads GLPLRGQNTRTNARTKRGIKKTMAGKKKAPRK. Residues 107–126 show a composition bias toward basic residues; that stretch reads ARTKRGIKKTMAGKKKAPRK.

Belongs to the universal ribosomal protein uS13 family. As to quaternary structure, part of the 30S ribosomal subunit.

Its subcellular location is the plastid. The protein localises to the chloroplast. In terms of biological role, located at the top of the head of the 30S subunit, it contacts several helices of the 16S rRNA. The sequence is that of Small ribosomal subunit protein uS13c from Gracilaria tenuistipitata var. liui (Red alga).